Reading from the N-terminus, the 122-residue chain is Large ribosomal subunit protein uL14 (122 aa).

The protein belongs to the universal ribosomal protein uL14 family. In terms of assembly, part of the 50S ribosomal subunit. Forms a cluster with proteins L3 and L19. In the 70S ribosome, L14 and L19 interact and together make contacts with the 16S rRNA in bridges B5 and B8.

Binds to 23S rRNA. Forms part of two intersubunit bridges in the 70S ribosome. The chain is Large ribosomal subunit protein uL14 from Rickettsia massiliae (strain Mtu5).